We begin with the raw amino-acid sequence, 374 residues long: Protein RecA (374 aa).

Position 77–84 (77–84 (GPESSGKT)) interacts with ATP. The segment at 355–374 (AAKTAAADKSAPAKASEAAA) is disordered.

The protein belongs to the RecA family.

It localises to the cytoplasm. In terms of biological role, can catalyze the hydrolysis of ATP in the presence of single-stranded DNA, the ATP-dependent uptake of single-stranded DNA by duplex DNA, and the ATP-dependent hybridization of homologous single-stranded DNAs. It interacts with LexA causing its activation and leading to its autocatalytic cleavage. The chain is Protein RecA from Synechococcus sp. (strain CC9605).